The chain runs to 346 residues: Membrane progestin receptor alpha (346 aa).

The Cytoplasmic segment spans residues 1-72; it reads MAMAQKLSHL…RTLFQQHNEA (72 aa). A helical transmembrane segment spans residues 73–93; it reads VNVWTHLLAALVLLLRLALFV. Topologically, residues 94 to 103 are extracellular; sequence ETVDFWGDPH. Residues 104–124 traverse the membrane as a helical segment; it reads ALPLFIIVLASFTYLSFSALA. Residues 125–137 are Cytoplasmic-facing; that stretch reads HLLQAKSEFWHYS. Residues 138–158 traverse the membrane as a helical segment; the sequence is FFFLDYVGVAVYQFGSALAHF. The Extracellular segment spans residues 159-169; the sequence is YYAIEPAWHAQ. Residues 170 to 190 form a helical membrane-spanning segment; the sequence is VQAVFLPMAAFLAWLSCIGSC. Residues 191 to 237 lie on the Cytoplasmic side of the membrane; sequence YNKYIQKPGLLGRTCQEVPSVLAYALDISPVVHRIFVSSDPTTDDPA. A helical membrane pass occupies residues 238 to 258; that stretch reads LLYHKCQVVFFLLAAAFFSTF. Residues 259 to 276 lie on the Extracellular side of the membrane; the sequence is MPERWFPGSCHVFGQGHQ. The chain crosses the membrane as a helical span at residues 277–297; that stretch reads LFHIFLVLCTLAQLEAVALDY. Over 298-316 the chain is Cytoplasmic; the sequence is EARRPIYEPLHTHWPHNFS. The helical transmembrane segment at 317 to 337 threads the bilayer; that stretch reads GLFLLTVGSSILTAFLLSQLV. Topologically, residues 338 to 346 are extracellular; it reads QRKLDQKTK.

It belongs to the ADIPOR family. Expressed in a wide range of tissues including ovary, testis, placenta, uterus and bladder.

It localises to the cell membrane. In terms of biological role, plasma membrane progesterone (P4) receptor coupled to G proteins. Seems to act through a G(i) mediated pathway. May be involved in oocyte maturation. Involved in neurosteroid inhibition of apoptosis. Also binds dehydroepiandrosterone (DHEA), pregnanolone, pregnenolone and allopregnanolone. The protein is Membrane progestin receptor alpha of Homo sapiens (Human).